A 772-amino-acid polypeptide reads, in one-letter code: Gelsolin (772 aa).

Residues 1–17 form the signal peptide; that stretch reads LGALVVALCALSPPARA. Residues 18-33 constitute a propeptide that is removed on maturation; sequence ATASRGAPQARAPQGR. Residues 19 to 38 are disordered; sequence TASRGAPQARAPQGRVSPMR. Residues 41-166 are actin-severing; sequence TMVVEHPEFL…YKKGGVASGF (126 aa). The stretch at 66-148 is one Gelsolin-like 1 repeat; it reads FDLVPVPPNL…VQGFESATFL (83 aa). Residue Tyr-76 is modified to Phosphotyrosine. Gly-82, Asp-83, Glu-114, Asp-126, Gly-131, and Ala-133 together coordinate Ca(2+). Residues 113–116 are actin-actin interfilament contact point; sequence DESG. Residue 152-159 participates in a 1,2-diacyl-sn-glycero-3-phospho-(1D-myo-inositol-4,5-bisphosphate) binding; sequence KSGLKYKK. Residue Val-162 coordinates Ca(2+). 178–186 lines the a 1,2-diacyl-sn-glycero-3-phospho-(1D-myo-inositol-4,5-bisphosphate) pocket; that stretch reads RLFQVKGRR. A Gelsolin-like 2 repeat occupies 188–260; the sequence is VRATEVPVSW…SEEDAEPAGM (73 aa). Ca(2+)-binding residues include Gly-203 and Asp-204. A disulfide bond links Cys-205 and Cys-218. Residues Glu-226, Asp-276, Glu-319, Asp-320, and Glu-344 each coordinate Ca(2+). One copy of the Gelsolin-like 3 repeat lies at 307–379; sequence DENPFAQGAL…LPEGGETPLF (73 aa). Phosphotyrosine occurs at positions 399 and 455. An actin-binding, Ca-sensitive region spans residues 424 to 772; that stretch reads AAQHGMDDDG…LDRAIAELAA (349 aa). A Gelsolin-like 4 repeat occupies 445-526; that stretch reads SNKVPVDPAT…VQGKEPAHLM (82 aa). 7 residues coordinate Ca(2+): Gly-461, Asp-462, Glu-492, Asp-504, Gly-509, Pro-511, and Thr-541. A Gelsolin-like 5 repeat occupies 567-632; that stretch reads RAVEVIPKAG…AEGSEPDSFW (66 aa). Lys-574 is subject to N6-acetyllysine. The Ca(2+) site is built by Asn-581 and Asp-582. Tyr-593 carries the post-translational modification Phosphotyrosine. Glu-604 contributes to the Ca(2+) binding site. The residue at position 641 (Tyr-641) is a Phosphotyrosine. Residues 671-746 form a Gelsolin-like 6 repeat; the sequence is VEEVPGELMQ…VKQGFEPPSF (76 aa). 3 residues coordinate Ca(2+): Asp-686, Asp-687, and Glu-709. Thr-732 is modified (phosphothreonine).

The protein belongs to the villin/gelsolin family. In terms of assembly, binds to actin and to fibronectin. Identified in a complex composed of ACTA1, COBL, GSN and TMSB4X. Interacts with the inactive form of EIF2AK2/PKR. Interacts with FLII. Post-translationally, phosphorylated on tyrosine residues in vitro.

The protein resides in the cytoplasm. It localises to the cytoskeleton. The protein localises to the secreted. In terms of biological role, calcium-regulated, actin-modulating protein that binds to the plus (or barbed) ends of actin monomers or filaments, preventing monomer exchange (end-blocking or capping). It can promote the assembly of monomers into filaments (nucleation) as well as sever filaments already formed. Plays a role in ciliogenesis. The chain is Gelsolin (GSN) from Sus scrofa (Pig).